We begin with the raw amino-acid sequence, 185 residues long: Elongation factor P (185 aa).

The protein belongs to the elongation factor P family.

The protein resides in the cytoplasm. It participates in protein biosynthesis; polypeptide chain elongation. Involved in peptide bond synthesis. Stimulates efficient translation and peptide-bond synthesis on native or reconstituted 70S ribosomes in vitro. Probably functions indirectly by altering the affinity of the ribosome for aminoacyl-tRNA, thus increasing their reactivity as acceptors for peptidyl transferase. The sequence is that of Elongation factor P from Nitrosomonas europaea (strain ATCC 19718 / CIP 103999 / KCTC 2705 / NBRC 14298).